The primary structure comprises 149 residues: Glutamyl-tRNA(Gln) amidotransferase subunit C, mitochondrial (149 aa).

A mitochondrion-targeting transit peptide spans Met1–Leu25.

The protein belongs to the GatC family. Subunit of the heterotrimeric GatCAB amidotransferase (AdT) complex, composed of A, B and C subunits.

The protein localises to the mitochondrion. The enzyme catalyses L-glutamyl-tRNA(Gln) + L-glutamine + ATP + H2O = L-glutaminyl-tRNA(Gln) + L-glutamate + ADP + phosphate + H(+). In terms of biological role, allows the formation of correctly charged Gln-tRNA(Gln) through the transamidation of misacylated Glu-tRNA(Gln) in the mitochondria. The reaction takes place in the presence of glutamine and ATP through an activated gamma-phospho-Glu-tRNA(Gln). The sequence is that of Glutamyl-tRNA(Gln) amidotransferase subunit C, mitochondrial from Branchiostoma floridae (Florida lancelet).